A 332-amino-acid chain; its full sequence is Phosphate acyltransferase (332 aa).

This sequence belongs to the PlsX family. As to quaternary structure, homodimer. Probably interacts with PlsY.

The protein resides in the cytoplasm. The enzyme catalyses a fatty acyl-[ACP] + phosphate = an acyl phosphate + holo-[ACP]. It functions in the pathway lipid metabolism; phospholipid metabolism. Catalyzes the reversible formation of acyl-phosphate (acyl-PO(4)) from acyl-[acyl-carrier-protein] (acyl-ACP). This enzyme utilizes acyl-ACP as fatty acyl donor, but not acyl-CoA. The protein is Phosphate acyltransferase of Clostridium novyi (strain NT).